We begin with the raw amino-acid sequence, 423 residues long: Histidine--tRNA ligase (423 aa).

This sequence belongs to the class-II aminoacyl-tRNA synthetase family. Homodimer.

The protein resides in the cytoplasm. The enzyme catalyses tRNA(His) + L-histidine + ATP = L-histidyl-tRNA(His) + AMP + diphosphate + H(+). This chain is Histidine--tRNA ligase, found in Laribacter hongkongensis (strain HLHK9).